A 1034-amino-acid chain; its full sequence is Platelet endothelial aggregation receptor 1 (1034 aa).

Residues 1–18 (MPLCPLLLLALGLRLTGT) form the signal peptide. At 19-754 (LNSNDPNVCT…PTSPVTHNSL (736 aa)) the chain is on the extracellular side. The region spanning 23–101 (DPNVCTFWES…YYESRGACVP (79 aa)) is the EMI domain. 3 disulfide bridges follow: C27-C89, C53-C63, and C88-C99. N-linked (GlcNAc...) asparagine glycosylation is present at N150. EGF-like domains lie at 181 to 215 (YGPACQFDCQCYGASCDPQDGACFCPPGRAGPSCN), 223 to 258 (DGFFCPRTYPCQNGGVPQGSQGSCSCPPGWMGVICS), 266 to 301 (HGPNCTQECRCHNGGLCDRFTGQCHCAPGYIGDRCQ), 309 to 344 (FGQDCAETCDCAPGARCFPANGACLCEHGFTGDRCT), and 398 to 433 (HGPGCQEHCLCLHGGLCLADSGLCRCAPGYTGPHCA). Disulfide bonds link C185/C196, C189/C203, C205/C214, C233/C246, and C248/C257. The N-linked (GlcNAc...) asparagine glycan is linked to N269. Cystine bridges form between C270-C282, C276-C289, C291-C300, C313-C325, C319-C332, C334-C343, C402-C414, C408-C421, and C423-C432. A glycan (N-linked (GlcNAc...) asparagine) is linked at N474. EGF-like domains follow at residues 484 to 519 (WGFNCNASCQCAHDGVCSPQTGACTCTPGWHGAHCQ), 575 to 605 (SNTCTCKNGGTCVSENGNCVCAPGFRGPSCQ), 613 to 648 (YGKRCVQCKCNNNHSSCHPSDGTCSCLAGWTGPDCS), and 656 to 691 (WGLKCSQLCQCHHGGTCHPQDGSCICTPGWTGPNCL). 12 disulfide bridges follow: C488-C500, C494-C507, C509-C518, C578-C586, C580-C593, C595-C604, C617-C629, C622-C636, C638-C647, C660-C672, C666-C679, and C681-C690. The chain crosses the membrane as a helical span at residues 755–775 (GAVIGIAVLGTLVVALIALFI). Residues 776–1034 (GYRQWQKGKE…PSPPSRRQDR (259 aa)) are Cytoplasmic-facing. The segment at 823 to 883 (TLSQCSPNPP…PHERGASHLD (61 aa)) is disordered. The segment covering 851–883 (RPSRAHGRENHVTLPADWKHRREPHERGASHLD) has biased composition (basic and acidic residues). The residue at position 923 (Y923) is a Phosphotyrosine. The tract at residues 925-1034 (TIRDLPSLPG…PSPPSRRQDR (110 aa)) is disordered. S951 bears the Phosphoserine mark. Over residues 972–991 (DSGTYEQPSPLSHNEESLGS) the composition is skewed to polar residues. A Phosphoserine modification is found at S1026.

The protein belongs to the MEGF family. In terms of assembly, interacts with SHC2 upon its aggregation-induced tyrosine phosphorylation. Interacts (via extracellular domain) with SVEP1. In terms of processing, phosphorylated in the intracellular domain on tyrosine residues. Phosphorylated on tyrosine residues by SRC. Tyrosine phosphorylation is detected upon platelet aggregation stimulated by collagen, TRAP and thrombin and platelet-platelet contacts but not after platelet activation. Tyrosine phosphorylation enhanced its association with SHC1 and SHC2. Phosphorylated in the intracellular domain on tyrosine residues. Phosphorylated when in the presence of SVEP1. As to expression, expressed in thymocytes, bone marrow stromal and osteogenic cells (at protein level). Strongly expressed in kidney and heart. Moderately expressed in lung, spleen, thymus, liver, brain, testis, skin and stomach. Expressed in hematopoietic stem progenitor cells.

The protein resides in the cell membrane. It localises to the cell projection. Its subcellular location is the lamellipodium. Required for SVEP1-mediated platelet activation, via its interaction with SVEP1 and subsequent activation of AKT/mTOR signaling. May be involved in the early stages of hematopoiesis. The chain is Platelet endothelial aggregation receptor 1 (Pear1) from Mus musculus (Mouse).